The chain runs to 196 residues: GTP cyclohydrolase-2 (196 aa).

49–53 (RVHSE) contributes to the GTP binding site. The Zn(2+) site is built by Cys-54, Cys-65, and Cys-67. GTP contacts are provided by residues Gln-70, 92–94 (EGR), and Thr-114. Asp-126 (proton acceptor) is an active-site residue. Catalysis depends on Arg-128, which acts as the Nucleophile. Residues Thr-149 and Lys-154 each contribute to the GTP site.

This sequence belongs to the GTP cyclohydrolase II family. As to quaternary structure, homodimer. Zn(2+) is required as a cofactor.

The enzyme catalyses GTP + 4 H2O = 2,5-diamino-6-hydroxy-4-(5-phosphoribosylamino)-pyrimidine + formate + 2 phosphate + 3 H(+). Its pathway is cofactor biosynthesis; riboflavin biosynthesis; 5-amino-6-(D-ribitylamino)uracil from GTP: step 1/4. Functionally, catalyzes the conversion of GTP to 2,5-diamino-6-ribosylamino-4(3H)-pyrimidinone 5'-phosphate (DARP), formate and pyrophosphate. The sequence is that of GTP cyclohydrolase-2 from Shigella boydii serotype 18 (strain CDC 3083-94 / BS512).